The chain runs to 726 residues: Netrin-A (726 aa).

Residues M1–M29 form the signal peptide. A Laminin N-terminal domain is found at E46–R312. N-linked (GlcNAc...) asparagine glycosylation is found at N108, N112, and N127. Disulfide bonds link C313/C322, C315/C332, C334/C343, C346/C366, C369/C378, C371/C396, C399/C408, C411/C429, C432/C444, C434/C451, C453/C462, and C465/C479. Laminin EGF-like domains follow at residues C313–E368, C369–A431, and C432–K481. N-linked (GlcNAc...) asparagine glycosylation is present at N445. The interval L490–A516 is disordered. Disulfide bonds link C533-C671 and C549-C725. The region spanning C533–C725 is the NTR domain. Residues N652 and N679 are each glycosylated (N-linked (GlcNAc...) asparagine).

At the midline of developing CNS at the time of commissure formation and in different subsets of neurons, muscles, and epidermal patches.

It is found in the secreted. The protein localises to the extracellular space. The protein resides in the extracellular matrix. Netrins control guidance of CNS commissural axons at the midline and peripheral motor axons to their target muscles. This Drosophila melanogaster (Fruit fly) protein is Netrin-A (NetA).